A 427-amino-acid chain; its full sequence is Glutamate-1-semialdehyde 2,1-aminomutase (427 aa).

Position 265 is an N6-(pyridoxal phosphate)lysine (Lys-265).

The protein belongs to the class-III pyridoxal-phosphate-dependent aminotransferase family. HemL subfamily. As to quaternary structure, homodimer. It depends on pyridoxal 5'-phosphate as a cofactor.

It localises to the cytoplasm. The catalysed reaction is (S)-4-amino-5-oxopentanoate = 5-aminolevulinate. It functions in the pathway porphyrin-containing compound metabolism; protoporphyrin-IX biosynthesis; 5-aminolevulinate from L-glutamyl-tRNA(Glu): step 2/2. The protein is Glutamate-1-semialdehyde 2,1-aminomutase of Actinobacillus succinogenes (strain ATCC 55618 / DSM 22257 / CCUG 43843 / 130Z).